The sequence spans 436 residues: Drebrin-like protein (436 aa).

The 132-residue stretch at 2–133 (AVNLSRNGPA…EPECIMEKVA (132 aa)) folds into the ADF-H domain. Phosphothreonine is present on T26. S160 carries the post-translational modification Phosphoserine. N6-acetyllysine is present on K176. Positions 178 to 232 (NFWAKAEKEEENRRLEEKRRAEEEKQRLEEERRERELQEAARREQRYQEQHRSAG) form a coiled coil. Composition is skewed to basic and acidic residues over residues 185-229 (KEEE…EQHR) and 264-275 (HPREIFKQKERA). Positions 185-371 (KEEENRRLEE…GSGHIDNYMQ (187 aa)) are disordered. Residues 276 to 286 (MSTTSVSSSQP) are compositionally biased toward polar residues. A phosphoserine mark is found at S277, S280, S283, and S291. K296 is modified (N6-acetyllysine). T299 bears the Phosphothreonine mark. S311 carries the phosphoserine modification. Y340 and Y350 each carry phosphotyrosine. One can recognise an SH3 domain in the interval 377-436 (GQGLCARALYDYQAADDTEISFDPENLITGIEVIDEGWWRGYGPDGHFGMFPANYVELIE).

This sequence belongs to the ABP1 family. In terms of assembly, interacts with FGD1, MAP4K1 and PRAM1. Interacts with ANKRD54. Interacts with WASL and WIPF1. Interacts with SHANK2 and SHANK3. Interacts with both COBL and PACSIN1. Interacts with DNM1 and SYN1. In terms of tissue distribution, detected in brain (at protein level). Widely expressed in brain with highest levels in hippocampus and cerebral cortex. Located primarily in dendrites and, in moderate amounts, in cell bodies. Isoform 1 and isoform 3 are the predominant isoforms in brain.

The protein resides in the cytoplasm. It localises to the cytoskeleton. It is found in the cell projection. Its subcellular location is the lamellipodium. The protein localises to the ruffle. The protein resides in the cell cortex. It localises to the cytosol. It is found in the cell membrane. Its subcellular location is the synapse. The protein localises to the perikaryon. The protein resides in the neuron projection. It localises to the dendrite. It is found in the postsynaptic density. Its subcellular location is the golgi apparatus membrane. The protein localises to the cytoplasmic vesicle. The protein resides in the clathrin-coated vesicle membrane. It localises to the podosome. It is found in the early endosome. Its function is as follows. Adapter protein that binds F-actin and DNM1, and thereby plays a role in receptor-mediated endocytosis. Required for the formation of organized podosome rosettes. May act as a common effector of antigen receptor-signaling pathways in leukocytes. Acts as a key component of the immunological synapse that regulates T-cell activation by bridging TCRs and the actin cytoskeleton to gene activation and endocytic processes. Plays a role in the reorganization of the actin cytoskeleton, formation of cell projections, such as neurites, in neuron morphogenesis and synapse formation via its interaction with WASL and COBL. Does not bind G-actin and promote actin polymerization by itself. The chain is Drebrin-like protein from Rattus norvegicus (Rat).